A 173-amino-acid chain; its full sequence is Crossover junction endodeoxyribonuclease RuvC (173 aa).

Catalysis depends on residues Asp-8, Glu-67, and Asp-139. Residues Asp-8, Glu-67, and Asp-139 each contribute to the Mg(2+) site.

It belongs to the RuvC family. Homodimer which binds Holliday junction (HJ) DNA. The HJ becomes 2-fold symmetrical on binding to RuvC with unstacked arms; it has a different conformation from HJ DNA in complex with RuvA. In the full resolvosome a probable DNA-RuvA(4)-RuvB(12)-RuvC(2) complex forms which resolves the HJ. Mg(2+) serves as cofactor.

It localises to the cytoplasm. It catalyses the reaction Endonucleolytic cleavage at a junction such as a reciprocal single-stranded crossover between two homologous DNA duplexes (Holliday junction).. Its function is as follows. The RuvA-RuvB-RuvC complex processes Holliday junction (HJ) DNA during genetic recombination and DNA repair. Endonuclease that resolves HJ intermediates. Cleaves cruciform DNA by making single-stranded nicks across the HJ at symmetrical positions within the homologous arms, yielding a 5'-phosphate and a 3'-hydroxyl group; requires a central core of homology in the junction. The consensus cleavage sequence is 5'-(A/T)TT(C/G)-3'. Cleavage occurs on the 3'-side of the TT dinucleotide at the point of strand exchange. HJ branch migration catalyzed by RuvA-RuvB allows RuvC to scan DNA until it finds its consensus sequence, where it cleaves and resolves the cruciform DNA. In Aeromonas hydrophila subsp. hydrophila (strain ATCC 7966 / DSM 30187 / BCRC 13018 / CCUG 14551 / JCM 1027 / KCTC 2358 / NCIMB 9240 / NCTC 8049), this protein is Crossover junction endodeoxyribonuclease RuvC.